Consider the following 172-residue polypeptide: Secretory-abundant heat soluble protein 64681 (172 aa).

The N-terminal stretch at 1-19 is a signal peptide; the sequence is MSRTIVALILLGLAALAAA. The interval 30–59 is SAHS-c1; sequence EWAGKAWLGKWVSTDRSENWDAFVEALGLP. Residues 74 to 102 are SAHS-c2; the sequence is WKEGDHYHHQIIIADKSYKQDIQFKLGEE. 2 N-linked (GlcNAc...) asparagine glycosylation sites follow: Asn108 and Asn133. The SAHS-c3 stretch occupies residues 115–164; the sequence is KYTEVGDNLQNEVKIPSKNKTISDSYVVKGDELEKTYKINDVVAKRWYKK.

It belongs to the Secretory-abundant heat soluble protein (SAHS) family.

The protein resides in the secreted. Functionally, secreted heat soluble protein acting as a molecular shield in water-deficient condition. Tardigrade-specific intrinsically disordered proteins (TDPs) are essential for desiccation tolerance by forming non-crystalline amorphous solids upon desiccation, and this vitrified state mirrors their protective capabilities. This is Secretory-abundant heat soluble protein 64681 from Hypsibius exemplaris (Freshwater tardigrade).